The sequence spans 122 residues: Large ribosomal subunit protein uL14 (122 aa).

It belongs to the universal ribosomal protein uL14 family. As to quaternary structure, part of the 50S ribosomal subunit. Forms a cluster with proteins L3 and L19. In the 70S ribosome, L14 and L19 interact and together make contacts with the 16S rRNA in bridges B5 and B8.

Functionally, binds to 23S rRNA. Forms part of two intersubunit bridges in the 70S ribosome. This is Large ribosomal subunit protein uL14 from Ectopseudomonas mendocina (strain ymp) (Pseudomonas mendocina).